The sequence spans 219 residues: Adenylate kinase (219 aa).

10 to 15 (GAGKGT) serves as a coordination point for ATP. The NMP stretch occupies residues 30–59 (STGDMLRAAVKAETPVGLEAKKVMDAGQLV). AMP contacts are provided by residues threonine 31, arginine 36, 57–59 (QLV), 85–88 (GFPR), and glutamine 92. Positions 122 to 159 (GRRVHLSSGRTYHVLFNPPKQEGLDDETGEPLVQRADD) are LID. Residues arginine 123 and 132–133 (TY) each bind ATP. AMP is bound by residues arginine 156 and arginine 167. Glycine 203 serves as a coordination point for ATP.

It belongs to the adenylate kinase family. Monomer.

It localises to the cytoplasm. The catalysed reaction is AMP + ATP = 2 ADP. It functions in the pathway purine metabolism; AMP biosynthesis via salvage pathway; AMP from ADP: step 1/1. In terms of biological role, catalyzes the reversible transfer of the terminal phosphate group between ATP and AMP. Plays an important role in cellular energy homeostasis and in adenine nucleotide metabolism. This Chlorobium limicola (strain DSM 245 / NBRC 103803 / 6330) protein is Adenylate kinase.